We begin with the raw amino-acid sequence, 452 residues long: Plasmepsin I (452 aa).

Residues 1–37 (MALSIKEDFSSAFAKNESAVNSSTFNNNMKTWKIQKR) are Cytoplasmic-facing. Positions 1–123 (MALSIKEDFS…TGLTQKPHLG (123 aa)) are excised as a propeptide. The helical; Signal-anchor for type II membrane protein transmembrane segment at 38–58 (FQILYVFFFLLITGALFYYLI) threads the bilayer. Topologically, residues 59–452 (DNVLFPKNKK…VGFALAKKKL (394 aa)) are lumenal. The Peptidase A1 domain maps to 139–446 (YYGEAQIGDN…DYDNHTVGFA (308 aa)). Asp157 is a catalytic residue. A disulfide bridge connects residues Cys170 and Cys175. The active site involves Asp337. Cys372 and Cys408 are disulfide-bonded.

Belongs to the peptidase A1 family. In terms of processing, not N-glycosylated. Post-translationally, proteolytically cleaved into the soluble active mature form in the digestive vacuole by cysteine protease falcipains; the process begins at the early ring stage. Proteolysis requires an acidic environment.

It localises to the membrane. The protein localises to the vacuole lumen. It is found in the vacuole membrane. It catalyses the reaction Hydrolysis of the 33-Phe-|-Leu-34 bond in the alpha-chain of hemoglobin, leading to denaturation of molecule.. Its activity is regulated as follows. Inhibited by KNI derived compounds KNI-10333 and to a lesser extent KNI-10743. During the asexual blood stage, catalyzes the initial cleavage of native host hemoglobin (Hb) resulting in Hb denaturation; specifically cleaves between Phe-33 and Leu-34 of Hb alpha-chain. Digestion of host Hb is an essential step which provides the parasite with amino acids for protein synthesis, and regulates osmolarity. The sequence is that of Plasmepsin I from Plasmodium falciparum (isolate 3D7).